Reading from the N-terminus, the 58-residue chain is Small ribosomal subunit protein bS21 (58 aa).

A disordered region spans residues 30-58; sequence SEVRKREHYEKPSVKRKKKSEAARKRKFK. A compositionally biased stretch (basic and acidic residues) spans 31-42; it reads EVRKREHYEKPS. Over residues 43 to 58 the composition is skewed to basic residues; the sequence is VKRKKKSEAARKRKFK.

Belongs to the bacterial ribosomal protein bS21 family.

The sequence is that of Small ribosomal subunit protein bS21 from Clostridium perfringens (strain ATCC 13124 / DSM 756 / JCM 1290 / NCIMB 6125 / NCTC 8237 / Type A).